Reading from the N-terminus, the 351-residue chain is Probable cell division control protein 7 homolog 2 (351 aa).

Residues 21–341 (YTPIEKIGEG…ASDALSHPFF (321 aa)) enclose the Protein kinase domain. ATP is bound by residues 27–35 (IGEGSFSVV) and Lys50. The Proton acceptor role is filled by Asp137.

Belongs to the protein kinase superfamily. Ser/Thr protein kinase family. CDC7 subfamily. Requires Mg(2+) as cofactor.

It carries out the reaction L-seryl-[protein] + ATP = O-phospho-L-seryl-[protein] + ADP + H(+). The enzyme catalyses L-threonyl-[protein] + ATP = O-phospho-L-threonyl-[protein] + ADP + H(+). Its function is as follows. Serine/threonine-protein kinase. Needed for the initiation of DNA synthesis during mitosis as well as for synaptonemal complex formation and commitment to recombination during meiosis. In Encephalitozoon cuniculi (strain GB-M1) (Microsporidian parasite), this protein is Probable cell division control protein 7 homolog 2 (CDC7-2).